A 160-amino-acid chain; its full sequence is Large ribosomal subunit protein uL22c (160 aa).

The protein belongs to the universal ribosomal protein uL22 family. Part of the 50S ribosomal subunit.

Its subcellular location is the plastid. It localises to the chloroplast. Functionally, this protein binds specifically to 23S rRNA. Its function is as follows. The globular domain of the protein is located near the polypeptide exit tunnel on the outside of the subunit, while an extended beta-hairpin is found that lines the wall of the exit tunnel in the center of the 70S ribosome. In Aethionema cordifolium (Lebanon stonecress), this protein is Large ribosomal subunit protein uL22c (rpl22).